The primary structure comprises 157 residues: SsrA-binding protein (157 aa).

The disordered stretch occupies residues 132–157; that stretch reads VHDKRQAQKDKDWAREKDRLFKKAYK. Over residues 135-157 the composition is skewed to basic and acidic residues; sequence KRQAQKDKDWAREKDRLFKKAYK.

This sequence belongs to the SmpB family.

Its subcellular location is the cytoplasm. Required for rescue of stalled ribosomes mediated by trans-translation. Binds to transfer-messenger RNA (tmRNA), required for stable association of tmRNA with ribosomes. tmRNA and SmpB together mimic tRNA shape, replacing the anticodon stem-loop with SmpB. tmRNA is encoded by the ssrA gene; the 2 termini fold to resemble tRNA(Ala) and it encodes a 'tag peptide', a short internal open reading frame. During trans-translation Ala-aminoacylated tmRNA acts like a tRNA, entering the A-site of stalled ribosomes, displacing the stalled mRNA. The ribosome then switches to translate the ORF on the tmRNA; the nascent peptide is terminated with the 'tag peptide' encoded by the tmRNA and targeted for degradation. The ribosome is freed to recommence translation, which seems to be the essential function of trans-translation. This chain is SsrA-binding protein, found in Francisella tularensis subsp. tularensis (strain FSC 198).